Reading from the N-terminus, the 349-residue chain is Xylitol-binding protein (349 aa).

Positions 1 to 22 (MNITSKIGAIAAAGAVGLGLTA) are cleaved as a signal peptide. C23 is lipidated: N-palmitoyl cysteine. C23 carries the S-diacylglycerol cysteine lipid modification. Positions 42, 121, 173, 224, 249, and 269 each coordinate xylitol.

Belongs to the bacterial solute-binding protein 2 family.

The protein localises to the cell membrane. Part of an ABC transporter complex likely involved in xylitol import. Binds xylitol. The chain is Xylitol-binding protein from Mycolicibacterium smegmatis (strain ATCC 700084 / mc(2)155) (Mycobacterium smegmatis).